Consider the following 476-residue polypeptide: Aspartyl/glutamyl-tRNA(Asn/Gln) amidotransferase subunit B (476 aa).

It belongs to the GatB/GatE family. GatB subfamily. As to quaternary structure, heterotrimer of A, B and C subunits.

It catalyses the reaction L-glutamyl-tRNA(Gln) + L-glutamine + ATP + H2O = L-glutaminyl-tRNA(Gln) + L-glutamate + ADP + phosphate + H(+). The catalysed reaction is L-aspartyl-tRNA(Asn) + L-glutamine + ATP + H2O = L-asparaginyl-tRNA(Asn) + L-glutamate + ADP + phosphate + 2 H(+). In terms of biological role, allows the formation of correctly charged Asn-tRNA(Asn) or Gln-tRNA(Gln) through the transamidation of misacylated Asp-tRNA(Asn) or Glu-tRNA(Gln) in organisms which lack either or both of asparaginyl-tRNA or glutaminyl-tRNA synthetases. The reaction takes place in the presence of glutamine and ATP through an activated phospho-Asp-tRNA(Asn) or phospho-Glu-tRNA(Gln). This is Aspartyl/glutamyl-tRNA(Asn/Gln) amidotransferase subunit B from Geobacillus kaustophilus (strain HTA426).